Reading from the N-terminus, the 310-residue chain is DDRGK domain-containing protein 1 (310 aa).

Residues 1 to 21 form a helical membrane-spanning segment; the sequence is MAAIIYLAIAAVASILLFVAV. At 22–310 the chain is on the cytoplasmic side; sequence KLLSTDTKTE…DSPAEISVNA (289 aa). Disordered stretches follow at residues 38–85 and 110–162; these read VGEL…DEYQ and KAEK…LKEE. The segment covering 52–70 has biased composition (basic residues); it reads PRARARRGLRNKTNRSKTQ. Positions 76-85 are enriched in acidic residues; it reads DYDDYDDEYQ.

It belongs to the DDRGK1 family.

It localises to the endoplasmic reticulum membrane. Substrate adapter for ufmylation, the covalent attachment of the ubiquitin-like modifier UFM1 to substrate proteins. This chain is DDRGK domain-containing protein 1, found in Trichoplax adhaerens (Trichoplax reptans).